Consider the following 66-residue polypeptide: Large ribosomal subunit protein bL33c (66 aa).

Belongs to the bacterial ribosomal protein bL33 family.

It localises to the plastid. The protein localises to the chloroplast. In Arabis hirsuta (Hairy rock-cress), this protein is Large ribosomal subunit protein bL33c.